A 123-amino-acid chain; its full sequence is Large ribosomal subunit protein bL12 (123 aa).

It belongs to the bacterial ribosomal protein bL12 family. Homodimer. Part of the ribosomal stalk of the 50S ribosomal subunit. Forms a multimeric L10(L12)X complex, where L10 forms an elongated spine to which 2 to 4 L12 dimers bind in a sequential fashion. Binds GTP-bound translation factors.

Functionally, forms part of the ribosomal stalk which helps the ribosome interact with GTP-bound translation factors. Is thus essential for accurate translation. The polypeptide is Large ribosomal subunit protein bL12 (Pseudoalteromonas atlantica (strain T6c / ATCC BAA-1087)).